We begin with the raw amino-acid sequence, 538 residues long: Lipid scramblase CLPTM1L (538 aa).

Topologically, residues 1–10 (MWSGRSSFTS) are cytoplasmic. A helical transmembrane segment spans residues 11–31 (LVVGVFVVYVVHTCWVMYGIV). The Extracellular portion of the chain corresponds to 32–284 (YTRPCSGDAN…VKGIFVDTNL (253 aa)). Asparagine 91, asparagine 101, and asparagine 229 each carry an N-linked (GlcNAc...) asparagine glycan. Residues 285–305 (YFLALTFFVAAFHLLFDFLAF) traverse the membrane as a helical segment. At 306 to 324 (KNDISFWKKKKSMIGMSTK) the chain is on the cytoplasmic side. A helical membrane pass occupies residues 325 to 342 (AVLWRCFSTVVIFLFLLD). The Extracellular segment spans residues 343-346 (EQTS). Residues 347–364 (LLVLVPAGVGAAIELWKV) form a helical membrane-spanning segment. Residues 365–402 (KKALKMTIFWRGLMPEFQFGTYSESERKTEEYDTQAMK) lie on the Cytoplasmic side of the membrane. Residues 403–423 (YLSYLLYPLCVGGAVYSLLNI) traverse the membrane as a helical segment. Residues 424-428 (KYKSW) are Extracellular-facing. Residues 429–449 (YSWLINSFVNGVYAFGFLFML) traverse the membrane as a helical segment. Residues 450-538 (PQLFVNYKLK…EKATRAPHTD (89 aa)) lie on the Cytoplasmic side of the membrane.

This sequence belongs to the CLPTM1 family. Ubiquitously expressed.

It localises to the endoplasmic reticulum membrane. The enzyme catalyses a 6-(alpha-D-glucosaminyl)-1-(1,2-diacyl-sn-glycero-3-phospho)-1D-myo-inositol(in) = a 6-(alpha-D-glucosaminyl)-1-(1,2-diacyl-sn-glycero-3-phospho)-1D-myo-inositol(out). It carries out the reaction 6-(alpha-D-glucosaminyl)-(1-octadecanoyl,2-(9Z)-octadecenoyl-sn-glycero-3-phospho)-1D-myo-inositol(in) = 6-(alpha-D-glucosaminyl)-(1-octadecanoyl,2-(9Z)-octadecenoyl-sn-glycero-3-phospho)-1D-myo-inositol(out). The catalysed reaction is a 1,2-diacyl-sn-glycero-3-phospho-(1D-myo-inositol)(in) = a 1,2-diacyl-sn-glycero-3-phospho-(1D-myo-inositol)(out). It catalyses the reaction a 1,2-diacyl-sn-glycero-3-phosphocholine(in) = a 1,2-diacyl-sn-glycero-3-phosphocholine(out). The enzyme catalyses a 1,2-diacyl-sn-glycero-3-phosphoethanolamine(in) = a 1,2-diacyl-sn-glycero-3-phosphoethanolamine(out). In terms of biological role, scramblase that mediates the translocation of glucosaminylphosphatidylinositol (alpha-D-GlcN-(1-6)-(1,2-diacyl-sn-glycero-3-phospho)-1D-myo-inositol, GlcN-PI) across the endoplasmic reticulum (ER) membrane, from the cytosolic leaflet to the luminal leaflet of the ER membrane, where it participates in the biosynthesis of glycosylphosphatidylinositol (GPI). GPI is a lipid glycoconjugate involved in post-translational modification of proteins. Can also translocate 1,2-diacyl-sn-glycero-3-phospho-(1D-myo-inositol) (phosphatidylinositol or PI), as well as several other phospholipids (1,2-diacyl-sn-glycero-3-phosphocholine, 1,2-diacyl-sn-glycero-3-phosphoethanolamine), and N-acetylglucosaminylphosphatidylinositol (GlcNAc-PI) in vitro. This Homo sapiens (Human) protein is Lipid scramblase CLPTM1L (CLPTM1L).